Here is a 186-residue protein sequence, read N- to C-terminus: Elongation factor P (186 aa).

It belongs to the elongation factor P family.

It localises to the cytoplasm. It participates in protein biosynthesis; polypeptide chain elongation. Functionally, involved in peptide bond synthesis. Stimulates efficient translation and peptide-bond synthesis on native or reconstituted 70S ribosomes in vitro. Probably functions indirectly by altering the affinity of the ribosome for aminoacyl-tRNA, thus increasing their reactivity as acceptors for peptidyl transferase. The polypeptide is Elongation factor P (Prochlorococcus marinus (strain MIT 9301)).